The primary structure comprises 182 residues: MKKHLLFLGAPGAGKGTQAELLSQTTSYLHLSTGELLRKEIEMNTNLGIQVKDIMNRGELVSDELVLKIVRQNLVKDNIGWILDGYPRNLSQADSLNEVLSEINQPLEVVFYLDIPEEVLIERLLLRGRKDDTEETIRTRVDIYKKTTEPLIQYFKDLSLLEYINADRDLKTISSDIKQKMA.

12-17 lines the ATP pocket; it reads GAGKGT. Positions 32-61 are NMP; the sequence is STGELLRKEIEMNTNLGIQVKDIMNRGELV. AMP is bound by residues Thr33, Arg38, 59-61, 85-88, and Gln92; these read ELV and GYPR. An LID region spans residues 126–132; that stretch reads LRGRKDD. Arg127 lines the ATP pocket. Positions 129 and 140 each coordinate AMP. Arg168 is a binding site for ATP.

It belongs to the adenylate kinase family. As to quaternary structure, monomer.

It localises to the cytoplasm. The enzyme catalyses AMP + ATP = 2 ADP. It functions in the pathway purine metabolism; AMP biosynthesis via salvage pathway; AMP from ADP: step 1/1. Its function is as follows. Catalyzes the reversible transfer of the terminal phosphate group between ATP and AMP. Plays an important role in cellular energy homeostasis and in adenine nucleotide metabolism. In Prochlorococcus marinus (strain AS9601), this protein is Adenylate kinase.